The sequence spans 542 residues: Glucose-6-phosphate isomerase (542 aa).

The Proton donor role is filled by glutamate 353. Catalysis depends on residues histidine 384 and lysine 508.

The protein belongs to the GPI family.

Its subcellular location is the cytoplasm. The enzyme catalyses alpha-D-glucose 6-phosphate = beta-D-fructose 6-phosphate. The protein operates within carbohydrate biosynthesis; gluconeogenesis. It participates in carbohydrate degradation; glycolysis; D-glyceraldehyde 3-phosphate and glycerone phosphate from D-glucose: step 2/4. Functionally, catalyzes the reversible isomerization of glucose-6-phosphate to fructose-6-phosphate. This is Glucose-6-phosphate isomerase from Corynebacterium efficiens (strain DSM 44549 / YS-314 / AJ 12310 / JCM 11189 / NBRC 100395).